The sequence spans 81 residues: Putative membrane protein insertion efficiency factor (81 aa).

This sequence belongs to the UPF0161 family.

Its subcellular location is the cell inner membrane. Could be involved in insertion of integral membrane proteins into the membrane. The chain is Putative membrane protein insertion efficiency factor from Pseudomonas syringae pv. syringae (strain B728a).